Consider the following 2103-residue polypeptide: Orsellinic acid synthase (2103 aa).

Residues Asp-17–Ile-232 form an N-terminal acylcarrier protein transacylase domain (SAT) region. The 435-residue stretch at Ala-348 to Asp-782 folds into the Ketosynthase family 3 (KS3) domain. Residues Cys-525, His-660, and His-702 each act as for beta-ketoacyl synthase activity in the active site. The malonyl-CoA:ACP transacylase (MAT) domain stretch occupies residues Val-881–Val-1197. Ser-973 (for acyl/malonyl transferase activity) is an active-site residue. The N-terminal hotdog fold stretch occupies residues His-1272 to Asp-1409. The region spanning His-1272–Ala-1582 is the PKS/mFAS DH domain. The tract at residues Gly-1303 to Asp-1579 is product template (PT) domain. His-1304 serves as the catalytic Proton acceptor; for dehydratase activity. The C-terminal hotdog fold stretch occupies residues Val-1433–Ala-1582. Asp-1493 (proton donor; for dehydratase activity) is an active-site residue. The disordered stretch occupies residues Ser-1592–Asp-1638. Low complexity-rich tracts occupy residues Lys-1594–Ser-1603 and Pro-1617–Pro-1631. Carrier domains lie at Val-1640–Ala-1716 and Pro-1741–Ala-1815. Ser-1676 is subject to O-(pantetheine 4'-phosphoryl)serine. The disordered stretch occupies residues Glu-1722–Pro-1743. Residue Ser-1775 is modified to O-(pantetheine 4'-phosphoryl)serine. Residues Glu-1809–Arg-1838 are disordered. Positions Ala-1810–Ser-1819 are enriched in acidic residues. The segment covering Gln-1823–Ser-1836 has biased composition (polar residues). The tract at residues Ala-1849 to Met-2082 is thioesterase (TE) domain.

The catalysed reaction is 3 malonyl-CoA + acetyl-CoA + 2 H(+) = orsellinate + 3 CO2 + 4 CoA. Its pathway is secondary metabolite biosynthesis. Non-reducing polyketide synthase; part of the gene cluster that mediates the biosynthesis of orsellinic acid, as well as of the cathepsin K inhibitors F9775 A and F9775 B. The non-reducing polyketide synthase orsA produces orsellinic acid by condensing acetyl-CoA with 3 malonyl-CoA units. Further modifications by the decarboxylase orsB and the tyrosinase-like protein orsC lead to the production of F9775 A and F9775 B. The functions of orsD and orsE remain unclear since only orsB and orsC are required to convert orsellinic acid into F9775 A and F9775 B. The chain is Orsellinic acid synthase from Emericella nidulans (strain FGSC A4 / ATCC 38163 / CBS 112.46 / NRRL 194 / M139) (Aspergillus nidulans).